Reading from the N-terminus, the 278-residue chain is MKKNRAFLKWAGGKYPLLDDIKRHLPKGECLVEPFVGAGSVFLNTDFSRYILADINSDLISLYNIVKMRTDEYVQAARELFVPETNCAEVYYQFREEFNKSQDPFRRAVLFLYLNRYGYNGLCRYNLRGEFNVPFGRYKKPYFPEAELYHFAEKAQNAFFYCESYADSMARADDASVVYCDPPYAPLSATANFTAYHTNSFTLEQQAHLAEIAEGLVERHIPVLISNHDTMLTREWYQRAKLHVVKVRRSISSNGGTRKKVDELLALYKPGVVSPAKK.

4 residues coordinate S-adenosyl-L-methionine: Trp-10, Lys-14, Asp-54, and Asp-181.

It belongs to the N(4)/N(6)-methyltransferase family.

It carries out the reaction a 2'-deoxyadenosine in DNA + S-adenosyl-L-methionine = an N(6)-methyl-2'-deoxyadenosine in DNA + S-adenosyl-L-homocysteine + H(+). An alpha subtype methylase, recognizes the double-stranded sequence 5'-GATC-3' and methylates A-2. May be involved in methyl-directed DNA mismatch repair, initiation of chromosome replication and gene expression. This Escherichia coli O157:H7 protein is DNA adenine methylase (dam).